Reading from the N-terminus, the 124-residue chain is Ragulator complex protein LAMTOR3 homolog (124 aa).

Belongs to the LAMTOR3 family. Part of the Ragulator complex composed of Lamtor3, Lamtor2, CG14184, CG14812, and Lamtor4.

In terms of biological role, regulator of the TOR pathway, a signaling cascade that promotes cell growth in response to growth factors, energy levels, and amino acids. As part of the Ragulator complex, may activate the TOR signaling cascade in response to amino acids. This is Ragulator complex protein LAMTOR3 homolog from Drosophila melanogaster (Fruit fly).